Here is a 229-residue protein sequence, read N- to C-terminus: Small ribosomal subunit protein mS23 (229 aa).

This sequence belongs to the mitochondrion-specific ribosomal protein mS23 family. Component of the mitochondrial small ribosomal subunit.

It localises to the mitochondrion. This is Small ribosomal subunit protein mS23 (RSM25) from Yarrowia lipolytica (strain CLIB 122 / E 150) (Yeast).